We begin with the raw amino-acid sequence, 236 residues long: Probable transmembrane ascorbate ferrireductase 4 (236 aa).

A Cytochrome b561 domain is found at 14–210 (FARLSGLVVA…LGCIVITAAI (197 aa)). The next 3 membrane-spanning stretches (helical) occupy residues 17–37 (LSGLVVAVSVLYWALFLPNLG), 42–62 (TLHPLLMVIGFILVSGEAILI), and 76–96 (VHLWLQGMALASAVFGIWTKF). The heme b site is built by histidine 44, histidine 77, and histidine 110. Helical transmembrane passes span 112–132 (WMGLLSVSLFAAQWVTGFMSF), 144–164 (TFLPWHVFLGLYTYGLAIATA), and 191–211 (VNGLGLGLALLGCIVITAAIL). Heme b is bound at residue histidine 149.

As to quaternary structure, homodimer. Heme b is required as a cofactor.

It localises to the membrane. The enzyme catalyses Fe(3+)(out) + L-ascorbate(in) = monodehydro-L-ascorbate radical(in) + Fe(2+)(out) + H(+). Two-heme-containing cytochrome. May catalyze ascorbate-dependent trans-membrane ferric-chelate reduction. In Arabidopsis thaliana (Mouse-ear cress), this protein is Probable transmembrane ascorbate ferrireductase 4 (CYB561D).